The chain runs to 373 residues: MAGKENAAAAQPRLTRAAAKRAAAVTAVAVAAKRKRVALSELPTLSNNNAVVLKPQPAPRGGKRAASHAAEPKKPAPPPAPAVVVVVDDDEEGEGDPQLCAPYASDINSYLRSMEVQAKRRPAADYIETVQVDVTANMRGILVDWLVEVAEEYKLVSDTLYLTVSYIDRFLSAKSINRQKLQLLGVSAMLIASKYEEISPPNVEDFCYITDNTYMKQEVVKMERDILNVLKFEMGNPTTKTFLRMFIRSSQEDDKYPSLPLEFMCSYLAELSLLEYGCVRLLPSVVAASVVFVARLTLDSDTNPWSKKLQEVTGYRASELKDCITCIHDLQLNRKGSSLMAIRDKYKQHRFKGVSTLLPPVEIPASYFEDLNE.

The segment at 50-80 (AVVLKPQPAPRGGKRAASHAAEPKKPAPPPA) is disordered.

It belongs to the cyclin family. Cyclin AB subfamily.

The polypeptide is Cyclin-A3-1 (CYCA3-1) (Oryza sativa subsp. japonica (Rice)).